The chain runs to 1977 residues: Echinoderm microtubule-associated protein-like 5 (1977 aa).

10 WD repeats span residues 59 to 100, 104 to 145, 148 to 187, 195 to 233, 235 to 273, 280 to 321, 323 to 362, 406 to 445, 449 to 488, and 561 to 601; these read GHSD…TVSV, VHTH…MLSM, GHTD…LTPK, GDLQ…RTIQ, AHTA…TVID, GYKG…LIMQ, HCEG…LIAR, DRKE…KKVG, GSLS…EVTS, and GHSA…KLKD. The disordered stretch occupies residues 609 to 629; that stretch reads ESLAESNSDESDSDLSDVPEL. Acidic residues predominate over residues 615-629; sequence NSDESDSDLSDVPEL. WD repeat units follow at residues 725–766, 770–811, 814–853, 861–900, 901–940, 996–1035, 1038–1077, 1080–1120, and 1236–1276; these read GHDD…PLSI, YHQY…KLSV, GSKD…LIGK, GKND…KTVK, AHDG…KTYA, HMEG…CMLA, KLKK…DLVS, HRKD…RVGV, and AHST…HREK. Disordered stretches follow at residues 1276–1297 and 1323–1363; these read KKYC…YDSD and PHLQ…NVGK. The span at 1281–1294 shows a compositional bias: acidic residues; it reads SEESDIDSEEDGGY. A compositionally biased stretch (basic and acidic residues) spans 1326–1337; it reads QQKEPSVDERQG. 10 WD repeats span residues 1420-1471, 1475-1516, 1519-1558, 1568-1606, 1608-1654, 1699-1739, 1741-1782, 1783-1822, 1895-1934, and 1940-1977; these read EHND…TLSI, SHSK…KIAS, GHNQ…LLSK, ARMQ…RVVA, AHNG…RAFR, GHVD…MLNK, NLGH…GKKR, DRRC…TLNR, AEKA…KFAK, and GHSP…HMPH.

The protein belongs to the WD repeat EMAP family.

It is found in the cytoplasm. The protein resides in the cytoskeleton. Functionally, may modify the assembly dynamics of microtubules, such that microtubules are slightly longer, but more dynamic. The polypeptide is Echinoderm microtubule-associated protein-like 5 (Eml5) (Mus musculus (Mouse)).